Reading from the N-terminus, the 151-residue chain is Urease accessory protein UreE (151 aa).

The protein belongs to the UreE family.

The protein resides in the cytoplasm. Its function is as follows. Involved in urease metallocenter assembly. Binds nickel. Probably functions as a nickel donor during metallocenter assembly. The chain is Urease accessory protein UreE from Lachnoclostridium phytofermentans (strain ATCC 700394 / DSM 18823 / ISDg) (Clostridium phytofermentans).